Consider the following 287-residue polypeptide: Phosphatidylserine decarboxylase proenzyme (287 aa).

Catalysis depends on charge relay system; for autoendoproteolytic cleavage activity residues Asp90, His147, and Ser252. The Schiff-base intermediate with substrate; via pyruvic acid; for decarboxylase activity role is filled by Ser252. Ser252 carries the post-translational modification Pyruvic acid (Ser); by autocatalysis.

The protein belongs to the phosphatidylserine decarboxylase family. PSD-B subfamily. Prokaryotic type I sub-subfamily. As to quaternary structure, heterodimer of a large membrane-associated beta subunit and a small pyruvoyl-containing alpha subunit. The cofactor is pyruvate. In terms of processing, is synthesized initially as an inactive proenzyme. Formation of the active enzyme involves a self-maturation process in which the active site pyruvoyl group is generated from an internal serine residue via an autocatalytic post-translational modification. Two non-identical subunits are generated from the proenzyme in this reaction, and the pyruvate is formed at the N-terminus of the alpha chain, which is derived from the carboxyl end of the proenzyme. The autoendoproteolytic cleavage occurs by a canonical serine protease mechanism, in which the side chain hydroxyl group of the serine supplies its oxygen atom to form the C-terminus of the beta chain, while the remainder of the serine residue undergoes an oxidative deamination to produce ammonia and the pyruvoyl prosthetic group on the alpha chain. During this reaction, the Ser that is part of the protease active site of the proenzyme becomes the pyruvoyl prosthetic group, which constitutes an essential element of the active site of the mature decarboxylase.

It localises to the cell membrane. The catalysed reaction is a 1,2-diacyl-sn-glycero-3-phospho-L-serine + H(+) = a 1,2-diacyl-sn-glycero-3-phosphoethanolamine + CO2. The protein operates within phospholipid metabolism; phosphatidylethanolamine biosynthesis; phosphatidylethanolamine from CDP-diacylglycerol: step 2/2. Catalyzes the formation of phosphatidylethanolamine (PtdEtn) from phosphatidylserine (PtdSer). This Pseudomonas putida (strain W619) protein is Phosphatidylserine decarboxylase proenzyme.